The primary structure comprises 23 residues: NADP phosphatase 2 (23 aa).

Homodimer.

Its subcellular location is the cytoplasm. This is NADP phosphatase 2 from Arthrobacter sp. (strain KM).